The following is an 87-amino-acid chain: MAKEELLELDGIVDEVLPDSKYRVTLENGVVVGAYASGRMRKNHIRILAGDRVTLELSVYDLTKGRINFRHKDANSPRPPRAGQARR.

The region spanning 1-72 (MAKEELLELD…TKGRINFRHK (72 aa)) is the S1-like domain.

This sequence belongs to the IF-1 family. Component of the 30S ribosomal translation pre-initiation complex which assembles on the 30S ribosome in the order IF-2 and IF-3, IF-1 and N-formylmethionyl-tRNA(fMet); mRNA recruitment can occur at any time during PIC assembly.

It localises to the cytoplasm. One of the essential components for the initiation of protein synthesis. Stabilizes the binding of IF-2 and IF-3 on the 30S subunit to which N-formylmethionyl-tRNA(fMet) subsequently binds. Helps modulate mRNA selection, yielding the 30S pre-initiation complex (PIC). Upon addition of the 50S ribosomal subunit IF-1, IF-2 and IF-3 are released leaving the mature 70S translation initiation complex. This chain is Translation initiation factor IF-1 2, found in Burkholderia vietnamiensis (strain G4 / LMG 22486) (Burkholderia cepacia (strain R1808)).